Reading from the N-terminus, the 404-residue chain is Cytoplasmic 60S subunit biogenesis factor REI1 homolog 1 (404 aa).

2 C2H2-type zinc fingers span residues 4–28 (LTCN…SDWH) and 68–92 (YTCA…SRSH). The tract at residues 119–169 (QHRGSIDDDSEDEWVEVDSDEELAAEEASDSLSKLNVNESGSAEDMDDDGD) is disordered. Acidic residues-rich tracts occupy residues 125 to 147 (DDDS…EEAS) and 160 to 169 (SAEDMDDDGD). 2 consecutive C2H2-type zinc fingers follow at residues 178–201 (TCCL…HKHH) and 229–256 (FMCL…AKSH).

This sequence belongs to the REI1 family. Can form homodimer. Interacts with RLP24, RPL24A, RPL24B, EBP1 and JJJ1.

The protein resides in the cytoplasm. Pre-60S-associated factor involved in the cytoplasmic maturation of the 60S subunit. Involved in the dissociation and recycling of other late pre-60S factors before newly synthesized large ribosomal subunits enter translation. Can complement the growth defect of a yeast mutant lacking REI1. Required for leaf growth under cold temperature conditions. The protein is Cytoplasmic 60S subunit biogenesis factor REI1 homolog 1 of Arabidopsis thaliana (Mouse-ear cress).